Reading from the N-terminus, the 1168-residue chain is DNA-directed RNA polymerase subunit beta (1168 aa).

Belongs to the RNA polymerase beta chain family. The RNAP catalytic core consists of 2 alpha, 1 beta, 1 beta' and 1 omega subunit. When a sigma factor is associated with the core the holoenzyme is formed, which can initiate transcription.

The catalysed reaction is RNA(n) + a ribonucleoside 5'-triphosphate = RNA(n+1) + diphosphate. In terms of biological role, DNA-dependent RNA polymerase catalyzes the transcription of DNA into RNA using the four ribonucleoside triphosphates as substrates. This Corynebacterium kroppenstedtii (strain DSM 44385 / JCM 11950 / CIP 105744 / CCUG 35717) protein is DNA-directed RNA polymerase subunit beta.